Consider the following 523-residue polypeptide: Solute carrier family 35 member F5 (523 aa).

2 helical membrane passes run 69–89 (MALGIVILLLVDVIWVASSEL) and 101–121 (FFSTFAKTSMFVLYLLGFIIW). Position 207 is a phosphoserine (Ser-207). 8 consecutive transmembrane segments (helical) span residues 243–263 (ISFFFCFVWFLANLSYQEALS), 268–288 (AIVNILSSTSGLFTLILAAVF), 296–316 (FTLSKLLAVILSIGGVVLVNL), 327–347 (TIGSIWSLAGAMLYAVYIVMI), 361–381 (MFFGFVGLFNLLLLWPGFFLL), 395–415 (VVLMCIIINGLIGTVLSEFLW), 420–440 (FLTSSLIGTLALSLTIPLSII), and 452–472 (WLFFAGAIPVFFSFFIVTLLC). The region spanning 252 to 316 (FLANLSYQEA…SIGGVVLVNL (65 aa)) is the EamA domain.

This sequence belongs to the SLC35F solute transporter family.

Its subcellular location is the membrane. Functionally, putative solute transporter. The protein is Solute carrier family 35 member F5 (SLC35F5) of Pongo abelii (Sumatran orangutan).